A 104-amino-acid chain; its full sequence is U-scoloptoxin(10)-Cw1a (104 aa).

The N-terminal stretch at 1 to 23 is a signal peptide; sequence MNKTVAVFFAVICVICVIKSCKT.

The protein belongs to the scoloptoxin-10 family. Contains 3 disulfide bonds. Expressed by the venom gland.

It is found in the secreted. In Cormocephalus westwoodi (Westwood's green centipede), this protein is U-scoloptoxin(10)-Cw1a.